A 133-amino-acid polypeptide reads, in one-letter code: U6 snRNA-associated Sm-like protein LSm1 (133 aa).

The Sm domain maps to 5 to 80; it reads PGTASLIEDI…VVLLGEIDLE (76 aa). Serine 123 is subject to Phosphoserine. Threonine 129 carries the post-translational modification Phosphothreonine.

Belongs to the snRNP Sm proteins family. In terms of assembly, interacts with SLBP; interaction with SLBP occurs when histone mRNA is being rapidly degraded during the S phase. LSm subunits form a heteromer with a donut shape.

It is found in the cytoplasm. The protein resides in the P-body. Its function is as follows. Plays a role in the degradation of histone mRNAs, the only eukaryotic mRNAs that are not polyadenylated. Probably also part of an LSm subunits-containing complex involved in the general process of mRNA degradation. The polypeptide is U6 snRNA-associated Sm-like protein LSm1 (LSM1) (Homo sapiens (Human)).